The sequence spans 2161 residues: DNA polymerase epsilon catalytic subunit A (2161 aa).

3 short sequence motifs (nuclear localization signal) span residues 5-12, 1137-1144, and 1239-1246; these read NRRRDRKD, HKKVREKD, and LKKRKWKV. Positions 2038, 2041, 2063, and 2068 each coordinate Zn(2+). Residues 2038–2068 form a CysA-type zinc finger; sequence CSNCDAYRDLDICRDPALLTEKEWSCADTQC. Residues Cys-2099, Cys-2102, Cys-2114, and Cys-2116 each contribute to the [4Fe-4S] cluster site. Residues 2099-2116 carry the CysB motif motif; the sequence is CIRCNQVKAAHLTEQCEC. Positions 2130–2137 match the Nuclear localization signal 4 motif; that stretch reads SKRMEIFM.

It belongs to the DNA polymerase type-B family. In terms of assembly, heterotetramer. Subunit of the DNA polymerase II. Interacts (via C-terminus) with DPB2. Interacts with LHP1/TFL2. [4Fe-4S] cluster is required as a cofactor. Mostly expressed at low levels in inflorescence (floral meristem and flowers until anthesis), and, to a lower extent, in roots, seeds and leaves.

The protein localises to the nucleus. It catalyses the reaction DNA(n) + a 2'-deoxyribonucleoside 5'-triphosphate = DNA(n+1) + diphosphate. Its function is as follows. DNA polymerase II, which participates in chromosomal DNA replication. Required for the timing and determination of cell fate during plant embryogenesis and root pole development, by promoting cell cycle and cell type patterning. Necessary for proper shoot (SAM) and root apical meristem (RAM) functions. Involved in maintaining epigenetic states, controlling hypersensitive response (HR), and mediating abscisic acid (ABA) signaling. Required for flowering repression through a mechanism involving epigenetic gene silencing. May participate in processes involved in chromatin-mediated cellular memory. The sequence is that of DNA polymerase epsilon catalytic subunit A (POL2A) from Arabidopsis thaliana (Mouse-ear cress).